A 253-amino-acid polypeptide reads, in one-letter code: uncharacterized protein (253 aa).

S-adenosyl-L-methionine contacts are provided by residues G45, 66–67 (DA), 94–95 (AE), and R110.

The protein belongs to the methyltransferase superfamily.

This is an uncharacterized protein from Bacillus subtilis (strain 168).